A 376-amino-acid chain; its full sequence is Riboflavin biosynthesis protein RibD (376 aa).

The interval 1 to 150 (MEDFSEQQLF…QPYLYQRTHN (150 aa)) is deaminase. One can recognise a CMP/dCMP-type deaminase domain in the interval 6–128 (EQQLFFMRRA…MLRQAGIQVY (123 aa)). Histidine 55 provides a ligand contact to Zn(2+). Glutamate 57 (proton donor) is an active-site residue. Cysteine 80 and cysteine 89 together coordinate Zn(2+). The interval 151–376 (FPWTILKSAA…SPQVFEPIRN (226 aa)) is reductase. Alanine 159 provides a ligand contact to NADP(+). A substrate-binding site is contributed by serine 173. Tryptophan 175 is an NADP(+) binding site. A substrate-binding site is contributed by arginine 189. Residues threonine 201 and aspartate 205 each coordinate NADP(+). Positions 209 and 212 each coordinate substrate. Residue serine 230 participates in NADP(+) binding. Residue glutamate 300 participates in substrate binding. 302–308 (GTTLHTS) is a binding site for NADP(+).

In the N-terminal section; belongs to the cytidine and deoxycytidylate deaminase family. The protein in the C-terminal section; belongs to the HTP reductase family. Zn(2+) serves as cofactor.

The enzyme catalyses 2,5-diamino-6-hydroxy-4-(5-phosphoribosylamino)-pyrimidine + H2O + H(+) = 5-amino-6-(5-phospho-D-ribosylamino)uracil + NH4(+). It carries out the reaction 5-amino-6-(5-phospho-D-ribitylamino)uracil + NADP(+) = 5-amino-6-(5-phospho-D-ribosylamino)uracil + NADPH + H(+). The protein operates within cofactor biosynthesis; riboflavin biosynthesis; 5-amino-6-(D-ribitylamino)uracil from GTP: step 2/4. It functions in the pathway cofactor biosynthesis; riboflavin biosynthesis; 5-amino-6-(D-ribitylamino)uracil from GTP: step 3/4. In terms of biological role, converts 2,5-diamino-6-(ribosylamino)-4(3h)-pyrimidinone 5'-phosphate into 5-amino-6-(ribosylamino)-2,4(1h,3h)-pyrimidinedione 5'-phosphate. The sequence is that of Riboflavin biosynthesis protein RibD (ribD) from Chlamydia pneumoniae (Chlamydophila pneumoniae).